A 521-amino-acid chain; its full sequence is Glucose-1-phosphate adenylyltransferase large subunit 3, chloroplastic (521 aa).

The transit peptide at 1–61 (MDSCCNFSLG…RKLRPGVAYA (61 aa)) directs the protein to the chloroplast.

It belongs to the bacterial/plant glucose-1-phosphate adenylyltransferase family. In terms of assembly, heterotetramer. Probably are expressed in roots, flowers and/or seeds.

It is found in the plastid. The protein localises to the chloroplast. The catalysed reaction is alpha-D-glucose 1-phosphate + ATP + H(+) = ADP-alpha-D-glucose + diphosphate. The protein operates within glycan biosynthesis; starch biosynthesis. Its activity is regulated as follows. Activated by 3'phosphoglycerate, inhibited by orthophosphate. Allosteric regulation. In terms of biological role, this protein plays a role in synthesis of starch. It catalyzes the synthesis of the activated glycosyl donor, ADP-glucose from Glc-1-P and ATP. This is Glucose-1-phosphate adenylyltransferase large subunit 3, chloroplastic (APL3) from Arabidopsis thaliana (Mouse-ear cress).